A 206-amino-acid polypeptide reads, in one-letter code: Large ribosomal subunit protein uL4 (206 aa).

The segment at 48–97 (THAVKNRSLVSGGGKKPWKQKHTGRARQGSTRASQWVGGGKAMGPKPRDY) is disordered. Residues 63 to 72 (KPWKQKHTGR) are compositionally biased toward basic residues.

Belongs to the universal ribosomal protein uL4 family. In terms of assembly, part of the 50S ribosomal subunit.

In terms of biological role, one of the primary rRNA binding proteins, this protein initially binds near the 5'-end of the 23S rRNA. It is important during the early stages of 50S assembly. It makes multiple contacts with different domains of the 23S rRNA in the assembled 50S subunit and ribosome. Forms part of the polypeptide exit tunnel. The sequence is that of Large ribosomal subunit protein uL4 from Anaeromyxobacter sp. (strain K).